The sequence spans 230 residues: Heptaprenylglyceryl phosphate synthase (230 aa).

Residue K12 participates in sn-glycerol 1-phosphate binding. Residues D14 and T40 each contribute to the Mg(2+) site. Sn-glycerol 1-phosphate-binding positions include 159–164 (YIEYSG), G189, and 209–210 (GD).

The protein belongs to the GGGP/HepGP synthase family. Group I subfamily. As to quaternary structure, homodimer. Mg(2+) is required as a cofactor.

It catalyses the reaction sn-glycerol 1-phosphate + all-trans-heptaprenyl diphosphate = 3-heptaprenyl-sn-glycero-1-phosphate + diphosphate. It functions in the pathway membrane lipid metabolism; glycerophospholipid metabolism. In terms of biological role, prenyltransferase that catalyzes in vivo the transfer of the heptaprenyl moiety of heptaprenyl pyrophosphate (HepPP; 35 carbon atoms) to the C3 hydroxyl of sn-glycerol-1-phosphate (G1P), producing heptaprenylglyceryl phosphate (HepGP). This reaction is an ether-bond-formation step in the biosynthesis of archaea-type G1P-based membrane lipids found in Bacillales. The chain is Heptaprenylglyceryl phosphate synthase from Staphylococcus aureus (strain MRSA252).